The sequence spans 189 residues: Interferon alpha-F (189 aa).

The N-terminal stretch at M1–G23 is a signal peptide. 2 cysteine pairs are disulfide-bonded: C24–C122 and C52–C162.

It belongs to the alpha/beta interferon family.

The protein localises to the secreted. Produced by macrophages, IFN-alpha have antiviral activities. Interferon stimulates the production of two enzymes: a protein kinase and an oligoadenylate synthetase. This is Interferon alpha-F (IFNAF) from Bos taurus (Bovine).